A 570-amino-acid chain; its full sequence is Set1/Ash2 histone methyltransferase complex subunit ash-2 (570 aa).

The PHD-type zinc-finger motif lies at 19–76 (TTVCYCDGKRELGSVEVVCSTCLKWFHGRCLKEFHELNSNGVPFMICYTFTCKQCRPT). Residues 201 to 242 (NREPRHIELPPIEGPKTRGASKRRHAEAPVTGKKQKLAADYS) are disordered. The region spanning 270-468 (PNVPEDPAWN…TLVEMPGSYI (199 aa)) is the B30.2/SPRY domain.

Component of the SET2 complex (also known as the SET1/COMPASS complex), which contains at least set-2, swd-2.1, cfp-1, rbbp-5, wdr-5.1, dpy-30 and ash-2. Within the complex, interacts with cfp-1 and wdr-5.1. Expressed in somatic and germline tissues (at protein level).

The protein resides in the nucleus. Its function is as follows. Component of the set-2/ash-2 histone methyltransferase (HMT) complex. Required for the di- and trimethylation at 'Lys-4' of histone H3, a mark associated with epigenetic transcriptional activation. Implicated in the epigenetic inheritance of lifespan over several generations. Functions as a transcriptional regulator. Acts in the germline to limit the longevity of the soma, probably by regulating a lipid metabolism pathway that signals from the germline to the intestine, thereby preventing accumulation of mono-unsaturated fatty acids. The chain is Set1/Ash2 histone methyltransferase complex subunit ash-2 from Caenorhabditis elegans.